A 169-amino-acid polypeptide reads, in one-letter code: Transcription antitermination protein NusB (169 aa).

Belongs to the NusB family.

Functionally, involved in transcription antitermination. Required for transcription of ribosomal RNA (rRNA) genes. Binds specifically to the boxA antiterminator sequence of the ribosomal RNA (rrn) operons. In Deinococcus geothermalis (strain DSM 11300 / CIP 105573 / AG-3a), this protein is Transcription antitermination protein NusB.